The following is a 69-amino-acid chain: DNA gyrase inhibitor YacG (69 aa).

4 residues coordinate Zn(2+): cysteine 13, cysteine 16, cysteine 32, and cysteine 36.

The protein belongs to the DNA gyrase inhibitor YacG family. In terms of assembly, interacts with GyrB. Requires Zn(2+) as cofactor.

Functionally, inhibits all the catalytic activities of DNA gyrase by preventing its interaction with DNA. Acts by binding directly to the C-terminal domain of GyrB, which probably disrupts DNA binding by the gyrase. The chain is DNA gyrase inhibitor YacG from Neisseria gonorrhoeae (strain ATCC 700825 / FA 1090).